The sequence spans 325 residues: GMP reductase (325 aa).

Cys-173 functions as the Thioimidate intermediate in the catalytic mechanism. Position 202 to 225 (202 to 225 (IIADGGIRSHGDIAKSVRFGATMV)) interacts with NADP(+).

It belongs to the IMPDH/GMPR family. GuaC type 2 subfamily.

It carries out the reaction IMP + NH4(+) + NADP(+) = GMP + NADPH + 2 H(+). In terms of biological role, catalyzes the irreversible NADPH-dependent deamination of GMP to IMP. It functions in the conversion of nucleobase, nucleoside and nucleotide derivatives of G to A nucleotides, and in maintaining the intracellular balance of A and G nucleotides. The protein is GMP reductase of Delftia acidovorans (strain DSM 14801 / SPH-1).